The following is a 420-amino-acid chain: S-adenosylmethionine synthase (420 aa).

Position 16 (H16) interacts with ATP. D18 lines the Mg(2+) pocket. Position 44 (E44) interacts with K(+). L-methionine is bound by residues E57 and Q100. Residues 100–110 (QSPDIAQGVNT) are flexible loop. ATP contacts are provided by residues 175 to 177 (DGK), 251 to 252 (KF), D260, 266 to 267 (RK), A283, and K287. An L-methionine-binding site is contributed by D260. Position 291 (K291) interacts with L-methionine.

This sequence belongs to the AdoMet synthase family. In terms of assembly, homotetramer; dimer of dimers. Requires Mg(2+) as cofactor. K(+) is required as a cofactor.

It is found in the cytoplasm. The catalysed reaction is L-methionine + ATP + H2O = S-adenosyl-L-methionine + phosphate + diphosphate. It participates in amino-acid biosynthesis; S-adenosyl-L-methionine biosynthesis; S-adenosyl-L-methionine from L-methionine: step 1/1. In terms of biological role, catalyzes the formation of S-adenosylmethionine (AdoMet) from methionine and ATP. The overall synthetic reaction is composed of two sequential steps, AdoMet formation and the subsequent tripolyphosphate hydrolysis which occurs prior to release of AdoMet from the enzyme. The protein is S-adenosylmethionine synthase of Trichormus variabilis (strain ATCC 29413 / PCC 7937) (Anabaena variabilis).